Consider the following 25-residue polypeptide: C-type natriuretic peptide (25 aa).

Cysteine 9 and cysteine 25 form a disulfide bridge.

Venom gland.

Its subcellular location is the secreted. Its function is as follows. Snake venom natriuretic peptide that has a vasorelaxant activity in rat aortic strips and a diuretic potency in anesthetized rats. May act by activating natriuretic receptors (NPR1 and/or NPR2). This chain is C-type natriuretic peptide, found in Crotalus atrox (Western diamondback rattlesnake).